The following is a 354-amino-acid chain: Protein sex-lethal (354 aa).

A disordered region spans residues 1 to 21 (MYGNNNPGSNNNNGGYPPYGY). 2 RRM domains span residues 125–203 (TNLI…YARP) and 211–291 (TNLY…LAEE).

As to quaternary structure, part of a complex containing fl(2)d, Sxl and vir. Part of a complex composed of at least mei-P26, bam, bgcn and Sxl; this complex is involved in translational repression of nanos mRNA. interacts with mei-p26. Interacts with nito. Interacts with Unr; cooperates with Unr to prevent translation of msl-2 transcripts. Interacts with how; promoting nuclear retention of msl-2 transcripts. As to expression, expressed in somatic tissues, but not in the pole cells, which are the precursors of the germline. Expressed in the anterior of the germarium.

The protein localises to the nucleus. Its subcellular location is the cytoplasm. Its function is as follows. Sex determination switch protein, which controls sexual development and dosage compensation in females. Sxl protein is only active in females: it is inactive in males throughout development. Acts as a mRNA-binding protein, which specifically binds to a subset of pre-mRNAs and mRNAs and regulates their processing and/or translation. Binds nanos mRNA and is involved in bam-bgcn mediated repression of nanos mRNA translation. Promotes sexual development by controlling the female-specific alternative splicing of the transformer (tra) pre-mRNA: binds tightly to a characteristic uridine-rich polypyrimidine tract at the non-sex specific 3' splice site in one of the tra introns, preventing the general splicing factor U2AF from binding to this site and forcing it to bind to the female-specific 3' splice site. Acts as an inhibitor of dosage compensation in females by preventing production of msl-2 protein, an essential component of the MSL complex, the complex that mediates X-chromosome dosage compensation. Specifically binds to uridine stretches in both the 5'- and 3'-UTR of msl-2 transcripts. Sxl first acts at the splicing level by promoting retention of an intron in the 5' UTR of msl-2 pre-mRNA. The retained intron contains Sxl-binding sites that are required for subsequent steps of repression: after msl-2 mRNA export into the cytoplasm, Sxl coordinates its translational repression by targeting early steps of translation initiation. Together with how, Sxl also prevents production of msl-2 protein by preventing nuclear export of msl-2 transcripts. Embryo-specific product, which is expressed early only in female embryos and specifies female-adult specific splicing. This is Protein sex-lethal from Drosophila melanogaster (Fruit fly).